A 335-amino-acid chain; its full sequence is Ornithine carbamoyltransferase, catabolic (335 aa).

Carbamoyl phosphate-binding positions include 59–62 (STRT), Gln-86, Arg-110, and 137–140 (HPTQ). Residues Asn-169, Asp-233, and 237–238 (SM) contribute to the L-ornithine site. Residues 274–275 (CL) and Arg-319 each bind carbamoyl phosphate.

The protein belongs to the aspartate/ornithine carbamoyltransferase superfamily. OTCase family.

It localises to the cytoplasm. The catalysed reaction is carbamoyl phosphate + L-ornithine = L-citrulline + phosphate + H(+). The protein operates within amino-acid degradation; L-arginine degradation via ADI pathway; carbamoyl phosphate from L-arginine: step 2/2. In terms of biological role, reversibly catalyzes the transfer of the carbamoyl group from carbamoyl phosphate (CP) to the N(epsilon) atom of ornithine (ORN) to produce L-citrulline. This is Ornithine carbamoyltransferase, catabolic (arcB) from Bacillus licheniformis (strain ATCC 14580 / DSM 13 / JCM 2505 / CCUG 7422 / NBRC 12200 / NCIMB 9375 / NCTC 10341 / NRRL NRS-1264 / Gibson 46).